The following is a 1734-amino-acid chain: Gag-pol polyprotein (1734 aa).

Gly2 carries N-myristoyl glycine; by host lipidation. A PTAP/PSAP motif motif is present at residues 109-112; it reads PTAP. The segment at 112–217 is disordered; sequence PILPSGPSTQ…STTSRAFPLR (106 aa). The short motif at 128–132 is the LYPX(n)L motif element; that stretch reads LYPAF. Positions 161–164 match the PPXY motif motif; it reads PPPY. Ser191 bears the Phosphoserine; by host mark. The tract at residues 344 to 392 is interaction with host PIAS4; sequence GRSPTNLAKVKGITQGPNESPSAFLERLKEAYRRYTPYDPEDPGQETNV. The segment at 429–434 is interaction with host UBE2I; the sequence is IFNKRE. 2 stretches are compositionally biased toward basic and acidic residues: residues 433 to 474 and 485 to 498; these read RETP…REMS and RQDR…RPQL. Disordered regions lie at residues 433–498 and 512–551; these read RETP…RPQL and WAKD…EPRI. A CCHC-type zinc finger spans residues 501-518; sequence DQCAYCKEKGHWAKDCPK. Residues 560–630 enclose the Peptidase A2 domain; sequence VTFLVDTGAQ…CPYPLLGRDL (71 aa). The Protease; shared with dimeric partner role is filled by Asp565. In terms of domain architecture, Reverse transcriptase spans 740–931; sequence LDQGILVPCQ…KQVKYLGYLL (192 aa). Residues Asp808, Asp882, Asp883, Asp1182, Glu1220, Asp1241, and Asp1311 each contribute to the Mg(2+) site. Residues 1173 to 1319 enclose the RNase H type-1 domain; it reads PDADHTWYTD…ADQAAREAAI (147 aa). The HHCC-type zinc finger occupies 1386-1426; that stretch reads HRLTHLGYQKMKALLDRGESPYYMLNRDKTLQYVADSCTVC. Residues 1443–1601 enclose the Integrase catalytic domain; that stretch reads RGHRPGTHWE…TPYEILYGAP (159 aa). The Mg(2+) site is built by Asp1454 and Asp1513.

Homohexamer; further associates as homomultimer. The virus core is composed of a lattice formed from hexagonal rings, each containing six capsid monomers. Interacts with mouse UBE2I and mouse PIAS4. In terms of assembly, interacts (via PPXY motif) with host NEDD4. Interacts (via PSAP motif) with host TSG101. Interacts (via LYPX(n)L motif) with host PDCD6IP. As to quaternary structure, the reverse transcriptase is a monomer (Potential). Interacts (via RNase domains) with host release factor ETF1; this interaction is essential for translational readthrough of amber codon between viral gag and pol genes, as well as for viral replication. Homodimer. The cofactor is Mg(2+). Ubiquitinated by ITCH. Gag can recruit the ubiquitin ligase Itch in an L domain-independent manner to facilitate virus release via a mechanism that involves Gag ubiquitination. In terms of processing, specific enzymatic cleavages by the viral protease yield mature proteins. The protease is released by autocatalytic cleavage. The polyprotein is cleaved during and after budding, this process is termed maturation. Post-translationally, sumoylated; which is required for virus replication. Phosphorylated on serine residues.

It localises to the virion. Its subcellular location is the host cell membrane. The protein resides in the host late endosome membrane. The protein localises to the host endosome. It is found in the host multivesicular body. It localises to the host cytoplasm. The enzyme catalyses DNA(n) + a 2'-deoxyribonucleoside 5'-triphosphate = DNA(n+1) + diphosphate. It catalyses the reaction Endonucleolytic cleavage to 5'-phosphomonoester.. Its activity is regulated as follows. Most efficiently inhibited by Amprenavir, which is able to block Gag-Pol processing in infected cells. Functionally, plays a role in budding and is processed by the viral protease during virion maturation outside the cell. During budding, it recruits, in a PPXY-dependent or independent manner, Nedd4-like ubiquitin ligases that conjugate ubiquitin molecules to Gag-Pol, or to Gag-Pol binding host factors. Interaction with HECT ubiquitin ligases probably links the viral protein to the host ESCRT pathway and facilitates release. In terms of biological role, targets Gag and gag-pol polyproteins to the plasma membrane via a multipartite membrane binding signal, that includes its myristoylated N-terminus. Also mediates nuclear localization of the pre-integration complex. Its function is as follows. Constituent of the pre-integration complex (PIC) which tethers the latter to mitotic chromosomes. This allows the integration of the viral genome into the host DNA. Forms the spherical core of the virion that encapsulates the genomic RNA-nucleocapsid complex. Functionally, involved in the packaging and encapsidation of two copies of the genome. Binds with high affinity to conserved UCUG elements within the packaging signal, located near the 5'-end of the genome. This binding is dependent on genome dimerization. Acts as a nucleic acid chaperone which is involved in rearrangement of nucleic acid secondary structures during gRNA retrotranscription. In terms of biological role, the aspartyl protease mediates proteolytic cleavages of Gag and Gag-Pol polyproteins during or shortly after the release of the virion from the plasma membrane. Cleavages take place as an ordered, step-wise cascade to yield mature proteins. This process is called maturation. Displays maximal activity during the budding process just prior to particle release from the cell (Potential). Cleaves the translation initiation factor eIF4G leading to the inhibition of host cap-dependent translation. Its function is as follows. RT is a multifunctional enzyme that converts the viral dimeric RNA genome into dsDNA in the cytoplasm, shortly after virus entry into the cell. This enzyme displays a DNA polymerase activity that can copy either DNA or RNA templates, and a ribonuclease H (RNase H) activity that cleaves the RNA strand of RNA-DNA heteroduplexes in a partially processive 3' to 5' endonucleasic mode. Conversion of viral genomic RNA into dsDNA requires many steps. A tRNA binds to the primer-binding site (PBS) situated at the 5' end of the viral RNA. RT uses the 3' end of the tRNA primer to perform a short round of RNA-dependent minus-strand DNA synthesis. The reading proceeds through the U5 region and ends after the repeated (R) region which is present at both ends of viral RNA. The portion of the RNA-DNA heteroduplex is digested by the RNase H, resulting in a ssDNA product attached to the tRNA primer. This ssDNA/tRNA hybridizes with the identical R region situated at the 3' end of viral RNA. This template exchange, known as minus-strand DNA strong stop transfer, can be either intra- or intermolecular. RT uses the 3' end of this newly synthesized short ssDNA to perform the RNA-dependent minus-strand DNA synthesis of the whole template. RNase H digests the RNA template except for a polypurine tract (PPT) situated at the 5' end of the genome. It is not clear if both polymerase and RNase H activities are simultaneous. RNase H probably can proceed both in a polymerase-dependent (RNA cut into small fragments by the same RT performing DNA synthesis) and a polymerase-independent mode (cleavage of remaining RNA fragments by free RTs). Secondly, RT performs DNA-directed plus-strand DNA synthesis using the PPT that has not been removed by RNase H as primers. PPT and tRNA primers are then removed by RNase H. The 3' and 5' ssDNA PBS regions hybridize to form a circular dsDNA intermediate. Strand displacement synthesis by RT to the PBS and PPT ends produces a blunt ended, linear dsDNA copy of the viral genome that includes long terminal repeats (LTRs) at both ends. Catalyzes viral DNA integration into the host chromosome, by performing a series of DNA cutting and joining reactions. This enzyme activity takes place after virion entry into a cell and reverse transcription of the RNA genome in dsDNA. The first step in the integration process is 3' processing. This step requires a complex comprising the viral genome, matrix protein and integrase. This complex is called the pre-integration complex (PIC). The integrase protein removes 2 nucleotides from each 3' end of the viral DNA, leaving recessed CA OH's at the 3' ends. In the second step that requires cell division, the PIC enters cell nucleus. In the third step, termed strand transfer, the integrase protein joins the previously processed 3' ends to the 5' ends of strands of target cellular DNA at the site of integration. The last step is viral DNA integration into host chromosome. The chain is Gag-pol polyprotein (gag-pol) from Mus musculus (Mouse).